The sequence spans 235 residues: Nuclear egress protein 2 (235 aa).

The Perinuclear space segment spans residues 1–214; that stretch reads MNSTRLVYEL…IKPWTLSKKN (214 aa). A helical transmembrane segment spans residues 215–232; the sequence is IWTIILSLVAVVAIILKW. Residues 233 to 235 lie on the Nuclear side of the membrane; it reads REL.

Belongs to the herpesviridae NEC2 protein family. In terms of assembly, forms a heterohexameric complex with NEC1. Phosphorylated.

Its subcellular location is the host nucleus inner membrane. Functionally, plays an essential role in virion nuclear egress, the first step of virion release from infected cell. Within the host nucleus, NEC1 interacts with the newly formed capsid through the vertexes and directs it to the inner nuclear membrane by associating with NEC2. Induces the budding of the capsid at the inner nuclear membrane as well as its envelopment into the perinuclear space. There, the NEC1/NEC2 complex promotes the fusion of the enveloped capsid with the outer nuclear membrane and the subsequent release of the viral capsid into the cytoplasm where it will reach the secondary budding sites in the host Golgi or trans-Golgi network. The chain is Nuclear egress protein 2 from Saimiri sciureus (Common squirrel monkey).